We begin with the raw amino-acid sequence, 1423 residues long: Fructan beta-fructosidase (1423 aa).

The signal sequence occupies residues 1-39 (MEEETVCKNWFMRKSGKSWIFGCAVFFVLGLATALPVAA). Positions 44–161 (QTTAADTAVT…TNLEDMSHDT (118 aa)) are disordered. A compositionally biased stretch (polar residues) spans 69-126 (AVTETTQSEGTASKQLTTPAVADQTTEPTDNEPISSSDGASSPYQVTDTTEPQQTLTP). Substrate is bound by residues 455-458 (WAND), Gln-474, 513-514 (FS), 581-582 (RD), and Asp-783. Asp-458 is a catalytic residue. The involved in binding of sugars with beta-(2,6) linkages or binding of molecular weight fructans stretch occupies residues 867-871 (ASVEV). The region spanning 924 to 1002 (PVAMNTTTAK…SKENPSLSKT (79 aa)) is the BIG2 domain. Residues 1368–1385 (DVNSVQQTEPSVMSSSPK) are compositionally biased toward polar residues. The tract at residues 1368-1394 (DVNSVQQTEPSVMSSSPKATLPDTGDH) is disordered. The short motif at 1388–1392 (LPDTG) is the LPXTG sorting signal element. Residue Thr-1391 is modified to Pentaglycyl murein peptidoglycan amidated threonine. The propeptide at 1392–1423 (GDHKTDLSQLGVLAMIGSFLVEIAGYFKKRKD) is removed by sortase.

It belongs to the glycosyl hydrolase 32 family.

The protein resides in the secreted. Its subcellular location is the cell wall. It catalyses the reaction Hydrolysis of terminal, non-reducing (2-&gt;1)- and (2-&gt;6)-linked beta-D-fructofuranose residues in fructans.. In terms of biological role, this protein is a fructanase enzyme which degrades levans and inulins to fructose and also cleaves sucrose into glucose and fructose and can therefore function as an extracellular invertase. In Streptococcus mutans serotype c (strain ATCC 700610 / UA159), this protein is Fructan beta-fructosidase (fruA).